Reading from the N-terminus, the 79-residue chain is uncharacterized protein (79 aa).

Residues 15-37 (KSIVSVLALTSLGCGVFVISATA) traverse the membrane as a helical segment.

It localises to the membrane. This is an uncharacterized protein from Dictyostelium discoideum (Social amoeba).